A 1271-amino-acid polypeptide reads, in one-letter code: Diacylglycerol kinase kappa (1271 aa).

Positions 1 to 15 (MDRGAAAAQGTAPPQ) are enriched in low complexity. The disordered stretch occupies residues 1–160 (MDRGAAAAQG…PEPTPEPVTE (160 aa)). Over residues 23 to 44 (SPEPPPPWPPPPPPPAPPPAPP) the composition is skewed to pro residues. 33 tandem repeats follow at residues 48 to 51 (EASP), 52 to 55 (EPIP), 56 to 59 (EPCP), 60 to 63 (ELAP), 64 to 67 (GPCP), 68 to 71 (EATS), 72 to 75 (ESAT), 76 to 79 (ELYT), 80 to 83 (EPTP), 84 to 87 (EPAT), 88 to 91 (EPAS), 92 to 95 (EPAP), 96 to 99 (EPAT), 100 to 103 (EPAP), 104 to 107 (EPAT), 108 to 111 (EPAP), 112 to 115 (EPAP), 116 to 119 (EPAT), 120 to 123 (ESAP), 124 to 127 (EPTP), 128 to 131 (EPAL), 132 to 135 (ESVP), 136 to 139 (EPAP), 140 to 143 (ELTP), 144 to 147 (EVAP), 148 to 151 (ELAP), 152 to 155 (EPTP), 156 to 159 (EPVT), 160 to 163 (ELAP), 164 to 167 (EFCP), 168 to 171 (EAAP), 172 to 175 (EFRP), and 176 to 179 (SPAP). A 33 X 4 AA approximate tandem repeats of E-P-A-P region spans residues 48-179 (EASPEPIPEP…APEFRPSPAP (132 aa)). Residues 52–66 (EPIPEPCPELAPGPC) show a composition bias toward pro residues. Tyr78 bears the Phosphotyrosine mark. The segment covering 82–116 (TPEPATEPASEPAPEPATEPAPEPATEPAPEPAPE) has biased composition (pro residues). Positions 139 to 149 (PELTPEVAPEL) are enriched in low complexity. The interval 190 to 209 (ERGLKTSPSPSPSPSPRTPM) is disordered. The region spanning 216–309 (KILKEGPMLK…WINIIKTIQQ (94 aa)) is the PH domain. 2 Phorbol-ester/DAG-type zinc fingers span residues 327–377 (MHCW…SKDC) and 398–449 (PHQW…SKEC). In terms of domain architecture, DAGKc spans 487–622 (ACSCPLLIFI…LDRWSVMIRE (136 aa)). Disordered regions lie at residues 805–825 (DDPEDINQTSPRRRSRRGTLS) and 1252–1271 (RHREDEAEGDDPLTPSRSQL). The segment at 1199 to 1268 (PIFVPEEKSS…EGDDPLTPSR (70 aa)) is required for localization to the plasma membrane.

The protein belongs to the eukaryotic diacylglycerol kinase family. In terms of assembly, does not form homooligomers. In terms of processing, phosphorylated at Tyr-78 by some member of the SRC family in response to H(2)O(2). In terms of tissue distribution, expressed in testis, and to a lesser extent in placenta.

It localises to the cell membrane. It carries out the reaction a 1,2-diacyl-sn-glycerol + ATP = a 1,2-diacyl-sn-glycero-3-phosphate + ADP + H(+). The catalysed reaction is 1,2-di-(9Z-octadecenoyl)-sn-glycerol + ATP = 1,2-di-(9Z-octadecenoyl)-sn-glycero-3-phosphate + ADP + H(+). It participates in lipid metabolism; glycerolipid metabolism. With respect to regulation, inhibited in response to H(2)O(2). In terms of biological role, diacylglycerol kinase that converts diacylglycerol/DAG into phosphatidic acid/phosphatidate/PA and regulates the respective levels of these two bioactive lipids. Thereby, acts as a central switch between the signaling pathways activated by these second messengers with different cellular targets and opposite effects in numerous biological processes. This is Diacylglycerol kinase kappa from Homo sapiens (Human).